The following is a 769-amino-acid chain: Protein transport protein sec39 (769 aa).

The protein belongs to the SEC39 family. Component of a peripheral membrane protein complex consisting of dsl1, sec39 and tip20.

The protein resides in the endoplasmic reticulum membrane. Functionally, required for protein transport between the Golgi and the endoplasmic reticulum. May contribute to tethering of coatomer-coated retrograde transport vesicles to the ER membrane through interaction with and stabilization of the SNARE complex. The chain is Protein transport protein sec39 from Schizosaccharomyces pombe (strain 972 / ATCC 24843) (Fission yeast).